A 190-amino-acid polypeptide reads, in one-letter code: Potassium-transporting ATPase KdpC subunit (190 aa).

A helical membrane pass occupies residues 10-30 (TFIFLLLITGGVYPLLTTVLG).

This sequence belongs to the KdpC family. In terms of assembly, the system is composed of three essential subunits: KdpA, KdpB and KdpC.

It is found in the cell inner membrane. Part of the high-affinity ATP-driven potassium transport (or Kdp) system, which catalyzes the hydrolysis of ATP coupled with the electrogenic transport of potassium into the cytoplasm. This subunit acts as a catalytic chaperone that increases the ATP-binding affinity of the ATP-hydrolyzing subunit KdpB by the formation of a transient KdpB/KdpC/ATP ternary complex. The polypeptide is Potassium-transporting ATPase KdpC subunit (Shigella dysenteriae serotype 1 (strain Sd197)).